A 51-amino-acid chain; its full sequence is SPbeta prophage-derived uncharacterized protein YorQ (51 aa).

The sequence is that of SPbeta prophage-derived uncharacterized protein YorQ (yorQ) from Bacillus subtilis (strain 168).